Consider the following 268-residue polypeptide: Phosphatidylglycerol--prolipoprotein diacylglyceryl transferase (268 aa).

7 helical membrane passes run 23 to 43, 62 to 82, 97 to 117, 132 to 152, 179 to 199, 206 to 226, and 241 to 261; these read IGLR…RWLA, LLFN…VFFY, VWEG…AMIW, FVAP…FINL, SQLY…NIFI, ASVA…VEYV, and GQAL…WAYS. An a 1,2-diacyl-sn-glycero-3-phospho-(1'-sn-glycerol)-binding site is contributed by Arg145.

Belongs to the Lgt family.

It localises to the cell inner membrane. The catalysed reaction is L-cysteinyl-[prolipoprotein] + a 1,2-diacyl-sn-glycero-3-phospho-(1'-sn-glycerol) = an S-1,2-diacyl-sn-glyceryl-L-cysteinyl-[prolipoprotein] + sn-glycerol 1-phosphate + H(+). It functions in the pathway protein modification; lipoprotein biosynthesis (diacylglyceryl transfer). In terms of biological role, catalyzes the transfer of the diacylglyceryl group from phosphatidylglycerol to the sulfhydryl group of the N-terminal cysteine of a prolipoprotein, the first step in the formation of mature lipoproteins. The sequence is that of Phosphatidylglycerol--prolipoprotein diacylglyceryl transferase from Haemophilus influenzae (strain 86-028NP).